The sequence spans 874 residues: Alanine--tRNA ligase (874 aa).

Residues histidine 563, histidine 567, cysteine 665, and histidine 669 each contribute to the Zn(2+) site.

It belongs to the class-II aminoacyl-tRNA synthetase family. It depends on Zn(2+) as a cofactor.

It is found in the cytoplasm. It carries out the reaction tRNA(Ala) + L-alanine + ATP = L-alanyl-tRNA(Ala) + AMP + diphosphate. Its function is as follows. Catalyzes the attachment of alanine to tRNA(Ala) in a two-step reaction: alanine is first activated by ATP to form Ala-AMP and then transferred to the acceptor end of tRNA(Ala). Also edits incorrectly charged Ser-tRNA(Ala) and Gly-tRNA(Ala) via its editing domain. The protein is Alanine--tRNA ligase of Haemophilus ducreyi (strain 35000HP / ATCC 700724).